A 602-amino-acid polypeptide reads, in one-letter code: Elongation factor 4 (602 aa).

The region spanning 8–190 (DLIRNFSIVA…AIVHRLPPPK (183 aa)) is the tr-type G domain. GTP-binding positions include 20–25 (DHGKST) and 137–140 (NKID).

This sequence belongs to the TRAFAC class translation factor GTPase superfamily. Classic translation factor GTPase family. LepA subfamily.

The protein localises to the cell inner membrane. The enzyme catalyses GTP + H2O = GDP + phosphate + H(+). Its function is as follows. Required for accurate and efficient protein synthesis under certain stress conditions. May act as a fidelity factor of the translation reaction, by catalyzing a one-codon backward translocation of tRNAs on improperly translocated ribosomes. Back-translocation proceeds from a post-translocation (POST) complex to a pre-translocation (PRE) complex, thus giving elongation factor G a second chance to translocate the tRNAs correctly. Binds to ribosomes in a GTP-dependent manner. This chain is Elongation factor 4, found in Cereibacter sphaeroides (strain KD131 / KCTC 12085) (Rhodobacter sphaeroides).